A 476-amino-acid polypeptide reads, in one-letter code: NADH-quinone oxidoreductase subunit N (476 aa).

The next 14 helical transmembrane spans lie at 4–24 (LLALSPLILVCATAIVVMLTI), 32–52 (LTATLTVVGLNLALAAQVVAW), 67–87 (GLAVFGGVLILIATLACATLG), 100–117 (EYYLLLLCAAAGGLALVS), 121–141 (LAALFFGLELLSMPLYGMLAY), 155–175 (YMVLSAAASAFLLFGMALLYS), 198–218 (LMAGMGMMLIGLGFKLSIVPF), 230–250 (PAPAATFLASASKVAVLLVLL), 263–283 (LHSLLAVLAFVTMLVGNLLAL), 291–311 (LLGYSSIAHFGYLLVALVVND), 319–339 (ALYLVTYVLTTLGAFGVVTLL), 366–386 (AVLTVMMLSLAGIPFTAGFIG), 406–426 (VVAGSAIGLYYYLRVMVTLFL), and 447–467 (VVVLGLAALVVVLGVYPAPMI).

It belongs to the complex I subunit 2 family. In terms of assembly, NDH-1 is composed of 14 different subunits. Subunits NuoA, H, J, K, L, M, N constitute the membrane sector of the complex.

It localises to the cell inner membrane. It catalyses the reaction a quinone + NADH + 5 H(+)(in) = a quinol + NAD(+) + 4 H(+)(out). Its function is as follows. NDH-1 shuttles electrons from NADH, via FMN and iron-sulfur (Fe-S) centers, to quinones in the respiratory chain. The immediate electron acceptor for the enzyme in this species is believed to be ubiquinone. Couples the redox reaction to proton translocation (for every two electrons transferred, four hydrogen ions are translocated across the cytoplasmic membrane), and thus conserves the redox energy in a proton gradient. The sequence is that of NADH-quinone oxidoreductase subunit N from Chromohalobacter salexigens (strain ATCC BAA-138 / DSM 3043 / CIP 106854 / NCIMB 13768 / 1H11).